A 698-amino-acid chain; its full sequence is Glycine--tRNA ligase beta subunit (698 aa).

The protein belongs to the class-II aminoacyl-tRNA synthetase family. In terms of assembly, tetramer of two alpha and two beta subunits.

The protein localises to the cytoplasm. The enzyme catalyses tRNA(Gly) + glycine + ATP = glycyl-tRNA(Gly) + AMP + diphosphate. The protein is Glycine--tRNA ligase beta subunit of Xanthomonas campestris pv. campestris (strain 8004).